Reading from the N-terminus, the 129-residue chain is D-ribose pyranase (129 aa).

Catalysis depends on His20, which acts as the Proton donor. Residues Asp28, His96, and Tyr118 to Asn120 each bind substrate.

Belongs to the RbsD / FucU family. RbsD subfamily. Homodecamer.

Its subcellular location is the cytoplasm. It carries out the reaction beta-D-ribopyranose = beta-D-ribofuranose. The protein operates within carbohydrate metabolism; D-ribose degradation; D-ribose 5-phosphate from beta-D-ribopyranose: step 1/2. Functionally, catalyzes the interconversion of beta-pyran and beta-furan forms of D-ribose. This chain is D-ribose pyranase, found in Staphylococcus haemolyticus (strain JCSC1435).